A 369-amino-acid chain; its full sequence is Histidinol-phosphate aminotransferase (369 aa).

Residues Met1 to Pro39 form a disordered region. The residue at position 230 (Lys230) is an N6-(pyridoxal phosphate)lysine.

This sequence belongs to the class-II pyridoxal-phosphate-dependent aminotransferase family. Histidinol-phosphate aminotransferase subfamily. Homodimer. Pyridoxal 5'-phosphate is required as a cofactor.

The enzyme catalyses L-histidinol phosphate + 2-oxoglutarate = 3-(imidazol-4-yl)-2-oxopropyl phosphate + L-glutamate. It participates in amino-acid biosynthesis; L-histidine biosynthesis; L-histidine from 5-phospho-alpha-D-ribose 1-diphosphate: step 7/9. In Streptomyces avermitilis (strain ATCC 31267 / DSM 46492 / JCM 5070 / NBRC 14893 / NCIMB 12804 / NRRL 8165 / MA-4680), this protein is Histidinol-phosphate aminotransferase (hisC).